The sequence spans 454 residues: Trigger factor (454 aa).

Positions 169-261 (GDVAIADYEG…LKELKSRELP (93 aa)) constitute a PPIase FKBP-type domain.

This sequence belongs to the FKBP-type PPIase family. Tig subfamily.

It is found in the cytoplasm. It catalyses the reaction [protein]-peptidylproline (omega=180) = [protein]-peptidylproline (omega=0). Its function is as follows. Involved in protein export. Acts as a chaperone by maintaining the newly synthesized protein in an open conformation. Functions as a peptidyl-prolyl cis-trans isomerase. In Picosynechococcus sp. (strain ATCC 27264 / PCC 7002 / PR-6) (Agmenellum quadruplicatum), this protein is Trigger factor.